Reading from the N-terminus, the 172-residue chain is MAARGVNKVILVGHIGQDPEVRYMPNGGAVANLTLATSETWRVRQDGEMREHTEWHRVVVFGKLAEIASEYLRKGAQVYIEGQLRTRKWTDQSGQDKYTTEVIVNVGGTMQMLGRHNSQPQQEPQTPPTAAKGEGKAVKGAGNAAKGKNAAAPQQPPAQPDPAYDFDDDIPF.

An SSB domain is found at 6 to 111 (VNKVILVGHI…VIVNVGGTMQ (106 aa)). A DNA-binding region spans residues 55 to 61 (WHRVVVF). Residues 113 to 172 (LGRHNSQPQQEPQTPPTAAKGEGKAVKGAGNAAKGKNAAAPQQPPAQPDPAYDFDDDIPF) are disordered. Residues 119 to 153 (QPQQEPQTPPTAAKGEGKAVKGAGNAAKGKNAAAP) show a composition bias toward low complexity. An Important for interaction with partner proteins motif is present at residues 167-172 (DDDIPF).

As to quaternary structure, homotetramer.

Its function is as follows. Plays an important role in DNA replication, recombination and repair. Binds to ssDNA and to an array of partner proteins to recruit them to their sites of action during DNA metabolism. The protein is Single-stranded DNA-binding protein 2 (ssb2) of Salmonella typhimurium (strain LT2 / SGSC1412 / ATCC 700720).